Here is a 2271-residue protein sequence, read N- to C-terminus: Protein Ycf2 (2271 aa).

1628–1635 (GSIGTGRS) lines the ATP pocket.

Belongs to the Ycf2 family.

Its subcellular location is the plastid. The protein localises to the chloroplast stroma. Its function is as follows. Probable ATPase of unknown function. Its presence in a non-photosynthetic plant (Epifagus virginiana) and experiments in tobacco indicate that it has an essential function which is probably not related to photosynthesis. This chain is Protein Ycf2, found in Illicium oligandrum (Star anise).